The sequence spans 819 residues: Metabotropic glutamate receptor-like protein O (819 aa).

An N-terminal signal peptide occupies residues 1–19; the sequence is MKKVFFLILILNCVVGALS. Topologically, residues 20-394 are extracellular; sequence NKNICKISLL…FVDSYSNSIK (375 aa). Residues N99, N185, N277, N295, N330, and N370 are each glycosylated (N-linked (GlcNAc...) asparagine). A helical transmembrane segment spans residues 395–415; that stretch reads ISILSVSIFCIFICVLGMIFI. Topologically, residues 416 to 428 are cytoplasmic; sequence TVLRNARILKSSS. A helical transmembrane segment spans residues 429 to 449; that stretch reads PSFLLLILFGCIVIFTGCILF. Over 450-457 the chain is Extracellular; sequence SQPATDKT. The helical transmembrane segment at 458-478 threads the bilayer; sequence CQGRVWLLSIGYTIFLGSLLI. The Cytoplasmic portion of the chain corresponds to 479–503; the sequence is KNWRVWLLFDNKKLRKRSITNWKLY. Residues 504 to 524 form a helical membrane-spanning segment; sequence PWVAGILVVDVLILALWQGLG. The Extracellular portion of the chain corresponds to 525-550; it reads DIKSESRIIGTSFYQYTNVCTNNDQG. The chain crosses the membrane as a helical span at residues 551–571; it reads SIALYILLAFHGLKLLGTCFI. Residues 572–587 are Cytoplasmic-facing; that stretch reads SFKIKLVDIEEFNESK. Residues 588–608 form a helical membrane-spanning segment; that stretch reads PITTSVFIILFCIFTIILLIA. Over 609–624 the chain is Extracellular; that stretch reads PSSSSSSASSPQPIAS. Residues 625–645 form a helical membrane-spanning segment; sequence LETIICICSVTTTAISIGLLF. Topologically, residues 646-819 are cytoplasmic; it reads GDKIYFITTQ…NNENEIISDT (174 aa). Residues 674–819 form a disordered region; it reads KDCDDDDDDS…NNENEIISDT (146 aa). A compositionally biased stretch (basic residues) spans 695–712; it reads NKNKNKNRNQSEKKKRPN. Polar residues predominate over residues 726-739; the sequence is ESVVFNPPSNNDLT. Positions 748–768 are enriched in basic and acidic residues; the sequence is GIKEGHGHDSENNDEYEHHED. The span at 769-798 shows a compositional bias: acidic residues; the sequence is EDHEYEGEGEDEDHEDEYEVENDIEQEQEQ. Positions 799 to 808 are enriched in low complexity; the sequence is ESSNISISTK.

This sequence in the N-terminal section; belongs to the BMP lipoprotein family. It in the C-terminal section; belongs to the G-protein coupled receptor 3 family. GABA-B receptor subfamily.

It localises to the membrane. The polypeptide is Metabotropic glutamate receptor-like protein O (grlO) (Dictyostelium discoideum (Social amoeba)).